Reading from the N-terminus, the 153-residue chain is Cell division protein SepF (153 aa).

This sequence belongs to the SepF family. In terms of assembly, homodimer. Interacts with FtsZ.

Its subcellular location is the cytoplasm. In terms of biological role, cell division protein that is part of the divisome complex and is recruited early to the Z-ring. Probably stimulates Z-ring formation, perhaps through the cross-linking of FtsZ protofilaments. Its function overlaps with FtsA. This is Cell division protein SepF from Clostridium tetani (strain Massachusetts / E88).